The following is a 214-amino-acid chain: Glutathione S-transferase F12 (214 aa).

The 81-residue stretch at 2 to 82 folds into the GST N-terminal domain; sequence VVKLYGQVTA…YYATKFADQG (81 aa). Residues 11–12, 40–41, 53–54, and 66–67 contribute to the glutathione site; these read AA, QK, QV, and ES. The region spanning 89-214 is the GST C-terminal domain; sequence SLEHRAIVDQ…WKKLMVLAGH (126 aa).

Belongs to the GST superfamily. Phi family.

The protein localises to the cytoplasm. The protein resides in the cytosol. The enzyme catalyses RX + glutathione = an S-substituted glutathione + a halide anion + H(+). In terms of biological role, involved in the transport and/or accumulation of both anthocyanins and proanthocyanidins (PA)s in the vacuole. Functions in the cytosol to maintain the regular accumulation in the vacuole of PA precursors, such as epicatechin and glycosylated epicatechin. The sequence is that of Glutathione S-transferase F12 from Arabidopsis thaliana (Mouse-ear cress).